Here is a 119-residue protein sequence, read N- to C-terminus: Large ribosomal subunit protein uL18 (119 aa).

Positions 1 to 23 (MISKPDKNKTRQRRHARVRGKIS) are disordered. Residues 10–20 (TRQRRHARVRG) are compositionally biased toward basic residues.

It belongs to the universal ribosomal protein uL18 family. Part of the 50S ribosomal subunit; part of the 5S rRNA/L5/L18/L25 subcomplex. Contacts the 5S and 23S rRNAs.

In terms of biological role, this is one of the proteins that bind and probably mediate the attachment of the 5S RNA into the large ribosomal subunit, where it forms part of the central protuberance. The protein is Large ribosomal subunit protein uL18 of Lacticaseibacillus casei (strain BL23) (Lactobacillus casei).